The sequence spans 260 residues: Aspartate/glutamate leucyltransferase (260 aa).

Positions 241 to 251 (DRLPEEGDRGP) are enriched in basic and acidic residues. The segment at 241–260 (DRLPEEGDRGPARFPASLTE) is disordered.

This sequence belongs to the R-transferase family. Bpt subfamily.

The protein localises to the cytoplasm. It carries out the reaction N-terminal L-glutamyl-[protein] + L-leucyl-tRNA(Leu) = N-terminal L-leucyl-L-glutamyl-[protein] + tRNA(Leu) + H(+). The enzyme catalyses N-terminal L-aspartyl-[protein] + L-leucyl-tRNA(Leu) = N-terminal L-leucyl-L-aspartyl-[protein] + tRNA(Leu) + H(+). Its function is as follows. Functions in the N-end rule pathway of protein degradation where it conjugates Leu from its aminoacyl-tRNA to the N-termini of proteins containing an N-terminal aspartate or glutamate. The protein is Aspartate/glutamate leucyltransferase of Gluconacetobacter diazotrophicus (strain ATCC 49037 / DSM 5601 / CCUG 37298 / CIP 103539 / LMG 7603 / PAl5).